The following is a 233-amino-acid chain: tRNA (guanine-N(7)-)-methyltransferase (233 aa).

The S-adenosyl-L-methionine site is built by Glu-64, Glu-89, Asp-116, and Asp-138. Asp-138 is an active-site residue. Substrate-binding positions include Lys-142, Asp-174, and 212–215 (TRYE).

Belongs to the class I-like SAM-binding methyltransferase superfamily. TrmB family.

The catalysed reaction is guanosine(46) in tRNA + S-adenosyl-L-methionine = N(7)-methylguanosine(46) in tRNA + S-adenosyl-L-homocysteine. It functions in the pathway tRNA modification; N(7)-methylguanine-tRNA biosynthesis. Its function is as follows. Catalyzes the formation of N(7)-methylguanine at position 46 (m7G46) in tRNA. The polypeptide is tRNA (guanine-N(7)-)-methyltransferase (Rhizobium johnstonii (strain DSM 114642 / LMG 32736 / 3841) (Rhizobium leguminosarum bv. viciae)).